An 89-amino-acid polypeptide reads, in one-letter code: Small ribosomal subunit protein uS17 (89 aa).

Belongs to the universal ribosomal protein uS17 family. In terms of assembly, part of the 30S ribosomal subunit.

In terms of biological role, one of the primary rRNA binding proteins, it binds specifically to the 5'-end of 16S ribosomal RNA. This is Small ribosomal subunit protein uS17 from Xanthomonas campestris pv. campestris (strain 8004).